Reading from the N-terminus, the 36-residue chain is Potassium channel toxin alpha-KTx 11.3 (36 aa).

3 disulfides stabilise this stretch: C8–C27, C13–C33, and C17–C35.

This sequence belongs to the short scorpion toxin superfamily. Potassium channel inhibitor family. Alpha-KTx 11 subfamily. In terms of tissue distribution, expressed by the venom gland.

It is found in the secreted. Functionally, binds and inhibits voltage-sensitive potassium channels. Inhibits the vertebrate potassium channel Kv1.1/KCNA1 with low affinity. The sequence is that of Potassium channel toxin alpha-KTx 11.3 from Parabuthus granulatus (Granulated thick-tailed scorpion).